The chain runs to 465 residues: Gamma-aminobutyric acid receptor subunit alpha-6 (465 aa).

Residues Met1 to Gly19 form the signal peptide. Topologically, residues Gly20–Phe243 are extracellular. Asn31 is a glycosylation site (N-linked (GlcNAc...) asparagine). Arg84 lines the 4-aminobutanoate pocket. N-linked (GlcNAc...) asparagine glycosylation is found at Asn128 and Asn141. Thr147 lines the 4-aminobutanoate pocket. A disulfide bridge connects residues Cys156 and Cys170. The helical transmembrane segment at Met244–Ile264 threads the bilayer. The Cytoplasmic portion of the chain corresponds to Asn265–Pro270. The helical transmembrane segment at Ala271–Ala290 threads the bilayer. Over Arg291 to Asp304 the chain is Extracellular. The helical transmembrane segment at Trp305 to Asn325 threads the bilayer. Residues Tyr326–Arg424 are Cytoplasmic-facing. Residues Asn392–Gly415 form a disordered region. Positions Ser401 to Val413 are enriched in pro residues. A helical transmembrane segment spans residues Ile425–Lys445. Residues Asp446–Asn465 are Extracellular-facing.

The protein belongs to the ligand-gated ion channel (TC 1.A.9) family. Gamma-aminobutyric acid receptor (TC 1.A.9.5) subfamily. GABRA6 sub-subfamily. In terms of assembly, heteropentamer, formed by a combination of alpha (GABRA1-6), beta (GABRB1-3), gamma (GABRG1-3), delta (GABRD), epsilon (GABRE), rho (GABRR1-3), pi (GABRP) and theta (GABRQ) chains, each subunit exhibiting distinct physiological and pharmacological properties. Expressed in brain, in cerebellar granule cells.

Its subcellular location is the postsynaptic cell membrane. It is found in the cell membrane. The catalysed reaction is chloride(in) = chloride(out). Functionally, alpha subunit of the heteropentameric ligand-gated chloride channel gated by gamma-aminobutyric acid (GABA), a major inhibitory neurotransmitter in the brain. GABA-gated chloride channels, also named GABA(A) receptors (GABAAR), consist of five subunits arranged around a central pore and contain GABA active binding site(s) located at the alpha and beta subunit interface(s). When activated by GABA, GABAARs selectively allow the flow of chloride anions across the cell membrane down their electrochemical gradient. The protein is Gamma-aminobutyric acid receptor subunit alpha-6 (GABRA6) of Gallus gallus (Chicken).